We begin with the raw amino-acid sequence, 125 residues long: NADH dehydrogenase [ubiquinone] 1 beta subcomplex subunit 8, mitochondrial (125 aa).

The transit peptide at 1–29 (MAGRLSGVASRIMGGNGVVARSVGSSLRQ) directs the protein to the mitochondrion. The chain crosses the membrane as a helical span at residues 78 to 98 (ALAWLSGGLGFFVGLGLLAVL).

The protein belongs to the complex I NDUFB8 subunit family. In terms of assembly, complex I is composed of at least 49 different subunits.

The protein resides in the mitochondrion inner membrane. Functionally, accessory subunit of the mitochondrial membrane respiratory chain NADH dehydrogenase (Complex I), that is believed not to be involved in catalysis. Complex I functions in the transfer of electrons from NADH to the respiratory chain. The immediate electron acceptor for the enzyme is believed to be ubiquinone. The polypeptide is NADH dehydrogenase [ubiquinone] 1 beta subcomplex subunit 8, mitochondrial (Arabidopsis thaliana (Mouse-ear cress)).